A 456-amino-acid polypeptide reads, in one-letter code: Enolase (456 aa).

Residue glutamine 167 coordinates (2R)-2-phosphoglycerate. Glutamate 209 acts as the Proton donor in catalysis. Residues aspartate 250, glutamate 312, and aspartate 339 each contribute to the Mg(2+) site. The (2R)-2-phosphoglycerate site is built by lysine 364, arginine 393, serine 394, and lysine 415. Residue lysine 364 is the Proton acceptor of the active site.

Belongs to the enolase family. The cofactor is Mg(2+).

The protein localises to the cytoplasm. It localises to the secreted. Its subcellular location is the cell surface. It carries out the reaction (2R)-2-phosphoglycerate = phosphoenolpyruvate + H2O. It functions in the pathway carbohydrate degradation; glycolysis; pyruvate from D-glyceraldehyde 3-phosphate: step 4/5. Catalyzes the reversible conversion of 2-phosphoglycerate (2-PG) into phosphoenolpyruvate (PEP). It is essential for the degradation of carbohydrates via glycolysis. The protein is Enolase of Mycoplasmopsis pulmonis (strain UAB CTIP) (Mycoplasma pulmonis).